Here is a 1237-residue protein sequence, read N- to C-terminus: Tyrosine-protein kinase sid-3 (1237 aa).

The Protein kinase domain maps to 107–369 (IKLYELIGEG…REDLVAAMFL (263 aa)). ATP-binding positions include 113 to 121 (IGEGSFAVV) and K139. The active-site Proton acceptor is the D230. The 61-residue stretch at 366 to 426 (AMFLDAVARE…PRSVVFAQTN (61 aa)) folds into the SH3 domain. Disordered stretches follow at residues 683-704 (NQGS…GIQN), 741-802 (PPAP…APVQ), 826-919 (IQPQ…EERR), 940-986 (SNST…SEPI), 999-1018 (SATT…PSPP), and 1134-1156 (QQRQ…SAAS). Composition is skewed to polar residues over residues 749-766 (QPVS…TLQK), 778-791 (KRPT…SNGF), and 847-863 (SAPT…SQAS). Composition is skewed to low complexity over residues 881 to 910 (TPIT…TSTT) and 940 to 961 (SNST…PSTA). The segment covering 1138–1156 (AGSSSRAVPPASASTSAAS) has biased composition (low complexity).

It belongs to the protein kinase superfamily. Tyr protein kinase family. SYK/ZAP-70 subfamily. As to expression, ubiquitously present in all tissues tested. Expressed in the somatic cells of gut, pharynx, body wall muscle, neurons, skin and excretory canal cells.

The protein resides in the cytoplasm. It catalyses the reaction L-tyrosyl-[protein] + ATP = O-phospho-L-tyrosyl-[protein] + ADP + H(+). Tyrosine-protein kinase which plays a role in RNA-mediated gene silencing by mediating import of double-stranded RNA (dsRNA) into cells. Not required for import of ingested dsRNA into intestinal cells but involved in subsequent export from intestinal cells to internal tissues. This is Tyrosine-protein kinase sid-3 (sid-3) from Caenorhabditis elegans.